A 389-amino-acid polypeptide reads, in one-letter code: (2R)-sulfolactate sulfo-lyase subunit beta (389 aa).

Belongs to the UxaA family. (2R)-sulfolactate sulfo-lyase is composed of a SuyA and a SuyB subunit.

Its subcellular location is the cytoplasm. The catalysed reaction is (2R)-3-sulfolactate = sulfite + pyruvate + H(+). In terms of biological role, together with SuyA, desulfonates sulfolactate to pyruvate and sulfite. In Chromohalobacter salexigens (strain ATCC BAA-138 / DSM 3043 / CIP 106854 / NCIMB 13768 / 1H11), this protein is (2R)-sulfolactate sulfo-lyase subunit beta (suyB).